A 1289-amino-acid chain; its full sequence is uncharacterized protein (1289 aa).

The MHD1 domain occupies 615 to 733 (LDMYDVLKEL…DGMLSYSAQL (119 aa)). The disordered stretch occupies residues 745–774 (DEPSYSLESSDTRSSLSLNNANVNHEKSRS). Positions 748-762 (SYSLESSDTRSSLSL) are enriched in low complexity. Residues 834 to 966 (AQYHSSHNLE…DDGFPIDFSL (133 aa)) enclose the C2 domain. The region spanning 1044–1184 (YDAILPLFDY…KSVSELKDEV (141 aa)) is the MHD2 domain.

The protein localises to the cytoplasm. This is an uncharacterized protein from Saccharomyces cerevisiae (strain ATCC 204508 / S288c) (Baker's yeast).